We begin with the raw amino-acid sequence, 88 residues long: ATP synthase epsilon chain (88 aa).

It belongs to the ATPase epsilon chain family. As to quaternary structure, F-type ATPases have 2 components, CF(1) - the catalytic core - and CF(0) - the membrane proton channel. CF(1) has five subunits: alpha(3), beta(3), gamma(1), delta(1), epsilon(1). CF(0) has three main subunits: a, b and c.

Its subcellular location is the cell inner membrane. In terms of biological role, produces ATP from ADP in the presence of a proton gradient across the membrane. The sequence is that of ATP synthase epsilon chain (atpC) from Chlorobaculum tepidum (strain ATCC 49652 / DSM 12025 / NBRC 103806 / TLS) (Chlorobium tepidum).